Here is a 140-residue protein sequence, read N- to C-terminus: MAGWNAYIDSLMADGTCQDAAIVGYKDSPSVWAAVPGKTFVSITPAEVGVLVGKDRSSFFVNGLTLGGQKCSVIRDSLLQDGEFTMDLRTKSTGGAPTFNVTVTMTAKTLVLLMGKEGVHGGLINKKCYEMASHLRRSQY.

Ala2 is subject to N-acetylalanine. Ser28 carries the post-translational modification Phosphoserine. Lys54 is covalently cross-linked (Glycyl lysine isopeptide (Lys-Gly) (interchain with G-Cter in SUMO2); alternate). A Glycyl lysine isopeptide (Lys-Gly) (interchain with G-Cter in ubiquitin); alternate cross-link involves residue Lys54. Residue Ser57 is modified to Phosphoserine. An N6-acetyllysine modification is found at Lys108. At Tyr129 the chain carries Phosphotyrosine. A Phosphoserine; by ROCK1 modification is found at Ser138.

It belongs to the profilin family. In terms of assembly, found in a complex with XPO6, Ran, ACTB and PFN1. Interacts with ACTB. Interacts with VASP. Interacts with HTT. Interacts with SH3BGRL. Occurs in many kinds of cells as a complex with monomeric actin in a 1:1 ratio. Interacts with ACTMAP. In terms of processing, phosphorylation at Ser-138 reduces its affinity for G-actin and blocks its interaction with HTT, reducing its ability to inhibit androgen receptor (AR) and HTT aggregation.

It is found in the cytoplasm. It localises to the cytoskeleton. Its function is as follows. Binds to actin and affects the structure of the cytoskeleton. At high concentrations, profilin prevents the polymerization of actin, whereas it enhances it at low concentrations. By binding to PIP2, it inhibits the formation of IP3 and DG. Inhibits androgen receptor (AR) and HTT aggregation and binding of G-actin is essential for its inhibition of AR. This Mus musculus (Mouse) protein is Profilin-1 (Pfn1).